The chain runs to 162 residues: Cytochrome c-type biogenesis protein CcmE (162 aa).

Topologically, residues 1 to 8 (MNPRRKKR) are cytoplasmic. The chain crosses the membrane as a helical; Signal-anchor for type II membrane protein span at residues 9 to 29 (LTLAVALIGGVAAITSLLLYA). Residues 30 to 162 (LNSNLNLFYT…YSQQKAPDTK (133 aa)) are Periplasmic-facing. Heme-binding residues include His-131 and Tyr-135. The disordered stretch occupies residues 142–162 (EAMGQKHEKLDYSQQKAPDTK). Residues 153–162 (YSQQKAPDTK) show a composition bias toward polar residues.

This sequence belongs to the CcmE/CycJ family.

The protein localises to the cell inner membrane. Functionally, heme chaperone required for the biogenesis of c-type cytochromes. Transiently binds heme delivered by CcmC and transfers the heme to apo-cytochromes in a process facilitated by CcmF and CcmH. The sequence is that of Cytochrome c-type biogenesis protein CcmE from Shewanella baltica (strain OS223).